The following is a 461-amino-acid chain: Asparagine--tRNA ligase (461 aa).

The protein belongs to the class-II aminoacyl-tRNA synthetase family. As to quaternary structure, homodimer.

It localises to the cytoplasm. It carries out the reaction tRNA(Asn) + L-asparagine + ATP = L-asparaginyl-tRNA(Asn) + AMP + diphosphate + H(+). The chain is Asparagine--tRNA ligase from Geotalea uraniireducens (strain Rf4) (Geobacter uraniireducens).